The primary structure comprises 542 residues: Chaperonin GroEL (542 aa).

ATP contacts are provided by residues 29–32, Lys50, 86–90, Gly414, and Asp494; these read TLGP and DGTTT.

Belongs to the chaperonin (HSP60) family. Forms a cylinder of 14 subunits composed of two heptameric rings stacked back-to-back. Interacts with the co-chaperonin GroES.

The protein resides in the cytoplasm. It carries out the reaction ATP + H2O + a folded polypeptide = ADP + phosphate + an unfolded polypeptide.. In terms of biological role, together with its co-chaperonin GroES, plays an essential role in assisting protein folding. The GroEL-GroES system forms a nano-cage that allows encapsulation of the non-native substrate proteins and provides a physical environment optimized to promote and accelerate protein folding. In Cytophaga hutchinsonii (strain ATCC 33406 / DSM 1761 / CIP 103989 / NBRC 15051 / NCIMB 9469 / D465), this protein is Chaperonin GroEL.